Consider the following 226-residue polypeptide: PKHD-type hydroxylase PputW619_4316 (226 aa).

In terms of domain architecture, Fe2OG dioxygenase spans 78 to 178 (KVFPPLINCY…RYAAFFWTQS (101 aa)). Fe cation is bound by residues histidine 96, aspartate 98, and histidine 159. Residue arginine 169 participates in 2-oxoglutarate binding.

Fe(2+) is required as a cofactor. L-ascorbate serves as cofactor.

This is PKHD-type hydroxylase PputW619_4316 from Pseudomonas putida (strain W619).